The sequence spans 111 residues: Large ribosomal subunit protein uL24 (111 aa).

Basic and acidic residues predominate over residues 48-65 (EKPSRSNREGGRTEREAP). Positions 48–111 (EKPSRSNREG…AKTTGEELDD (64 aa)) are disordered. Polar residues predominate over residues 69–80 (SNVNPIDSNGES). Over residues 86–95 (KKVEDPDTGR) the composition is skewed to basic and acidic residues.

This sequence belongs to the universal ribosomal protein uL24 family. As to quaternary structure, part of the 50S ribosomal subunit.

One of two assembly initiator proteins, it binds directly to the 5'-end of the 23S rRNA, where it nucleates assembly of the 50S subunit. In terms of biological role, one of the proteins that surrounds the polypeptide exit tunnel on the outside of the subunit. This chain is Large ribosomal subunit protein uL24, found in Salinibacter ruber (strain DSM 13855 / M31).